Consider the following 166-residue polypeptide: Small ribosomal subunit protein uS5 (166 aa).

The S5 DRBM domain occupies leucine 11–valine 74.

Belongs to the universal ribosomal protein uS5 family. Part of the 30S ribosomal subunit. Contacts proteins S4 and S8.

Its function is as follows. With S4 and S12 plays an important role in translational accuracy. Functionally, located at the back of the 30S subunit body where it stabilizes the conformation of the head with respect to the body. The chain is Small ribosomal subunit protein uS5 from Enterococcus faecalis (strain ATCC 700802 / V583).